Reading from the N-terminus, the 555-residue chain is MSSLTPELRQSILEHLGFLYGERAPAVLGRLEEICSGFPAQRREGGWSEKDALLITYGDQIHAEGEPPLQTLYDFLYERLRGVFSGVHLLPFYPSTSDDGFSVVDFQRVDPELGTWTDIRIIAQDFRLMADLVCNHVSASSPWFQGFLQDDPQYQGFFITVDPGTDLSTVFRPRALPLLTPFQTPSGEKLVWTTFSPDQTDLNYANPEVLLEVIEALLCYVRNGAGLIRLDAVGFIWKEIGTSCMHLEGAHRIVKLMRLVLDAVAPHVLLVSETNAPHRENISYFGNGHDEAQLVYQFPLPPLVMHTFRTGDASKLAGWAAGLTLPSERTTFFNFLASHDGIGVVPAGGILQPEEIAALVRQALEHGGRVNHKDTPDGPVPYELCLTLFDALSNPNSDEAEDLKIARFLAANVILLSLQGIPGVYIHSLFGSPSDHAGFEESGIPRRLNRHKFTKAELEERLADPASRAAKILAAYSHLLRVRSMHPAFHPNAPQRILPSTEVLRIVRGEGDQAVGCYINVTDRPQVVSRIGKNLITGQWFTGVLKPYQAAWIID.

The active-site Nucleophile is the D231.

The protein belongs to the glycosyl hydrolase 13 family. Glucosylglycerate phosphorylase subfamily.

It carries out the reaction (2R)-2-O-(alpha-D-glucopyranosyl)-glycerate + phosphate = (R)-glycerate + alpha-D-glucose 1-phosphate. In terms of biological role, catalyzes the reversible phosphorolysis of glucosylglycerate into alpha-D-glucose 1-phosphate (Glc1P) and D-glycerate. May be a regulator of intracellular levels of glucosylglycerate, a compatible solute that primarily protects organisms facing salt stress and very specific nutritional constraints. Has a very strict substrate specificity. Cannot catalyze the phosphorolysis of sucrose or synthesize sucrose from Glc1P and D-fructose. The polypeptide is Glucosylglycerate phosphorylase (Allomeiothermus silvanus (strain ATCC 700542 / DSM 9946 / NBRC 106475 / NCIMB 13440 / VI-R2) (Thermus silvanus)).